Reading from the N-terminus, the 178-residue chain is Mediator of RNA polymerase II transcription subunit 28 (178 aa).

Residues 1 to 43 are disordered; the sequence is MAASLGGMFAGQPPGPPPPPPGLPGQASLLQAAPGAPRPSNST. A compositionally biased stretch (pro residues) spans 13-23; the sequence is PPGPPPPPPGL. Residues 109–145 adopt a coiled-coil conformation; it reads QVIKEDVSELRSELQRKDALVQKHLTKLRHWQQVLED.

Belongs to the Mediator complex subunit 28 family. As to quaternary structure, forms a ternary complex with NF2/merlin and GRB2. Binds to actin. Component of the Mediator complex, which is probably composed of MED1, MED4, MED6, MED7, MED8, MED9, MED10, MED11, MED12, MED13, MED13L, MED14, MED15, MED16, MED17, MED18, MED19, MED20, MED21, MED22, MED23, MED24, MED25, MED26, MED27, MED29, MED30, MED31, CCNC, CDK8 and CDC2L6/CDK11. The MED12, MED13, CCNC and CDK8 subunits form a distinct module termed the CDK8 module. Mediator containing the CDK8 module is less active than Mediator lacking this module in supporting transcriptional activation. Individual preparations of the Mediator complex lacking one or more distinct subunits have been variously termed ARC, CRSP, DRIP, PC2, SMCC and TRAP.

The protein resides in the nucleus. It is found in the cytoplasm. Its subcellular location is the membrane. Its function is as follows. May be part of a complex containing NF2/merlin that participates in cellular signaling to the actin cytoskeleton downstream of tyrosine kinase signaling pathways. Component of the Mediator complex, a coactivator involved in the regulated transcription of nearly all RNA polymerase II-dependent genes. Mediator functions as a bridge to convey information from gene-specific regulatory proteins to the basal RNA polymerase II transcription machinery. Mediator is recruited to promoters by direct interactions with regulatory proteins and serves as a scaffold for the assembly of a functional preinitiation complex with RNA polymerase II and the general transcription factors. The sequence is that of Mediator of RNA polymerase II transcription subunit 28 (Med28) from Rattus norvegicus (Rat).